Here is a 191-residue protein sequence, read N- to C-terminus: Hypoxanthine/guanine phosphoribosyltransferase (191 aa).

Belongs to the purine/pyrimidine phosphoribosyltransferase family. Archaeal HPRT subfamily. As to quaternary structure, homodimer.

Its subcellular location is the cytoplasm. It carries out the reaction IMP + diphosphate = hypoxanthine + 5-phospho-alpha-D-ribose 1-diphosphate. It catalyses the reaction GMP + diphosphate = guanine + 5-phospho-alpha-D-ribose 1-diphosphate. Its pathway is purine metabolism; IMP biosynthesis via salvage pathway; IMP from hypoxanthine: step 1/1. Functionally, catalyzes a salvage reaction resulting in the formation of IMP that is energically less costly than de novo synthesis. This Methanocella arvoryzae (strain DSM 22066 / NBRC 105507 / MRE50) protein is Hypoxanthine/guanine phosphoribosyltransferase.